Consider the following 337-residue polypeptide: D-alanine--D-alanine ligase (337 aa).

The ATP-grasp domain maps to 124-330 (KMWFSALGIP…FTEYLSLVIN (207 aa)). 154–209 (ALAQWGSIFVKAASQGSSVGCYKVDDSDKVAGVLKDAFGYAPYVIVEKTIKARELE) lines the ATP pocket. The Mg(2+) site is built by Asp284, Glu297, and Asn299.

This sequence belongs to the D-alanine--D-alanine ligase family. It depends on Mg(2+) as a cofactor. Mn(2+) serves as cofactor.

It is found in the cytoplasm. The catalysed reaction is 2 D-alanine + ATP = D-alanyl-D-alanine + ADP + phosphate + H(+). The protein operates within cell wall biogenesis; peptidoglycan biosynthesis. Its function is as follows. Cell wall formation. The polypeptide is D-alanine--D-alanine ligase (Shewanella baltica (strain OS195)).